The chain runs to 186 residues: NADH-quinone oxidoreductase subunit B (186 aa).

[4Fe-4S] cluster is bound by residues cysteine 44, cysteine 45, cysteine 110, and cysteine 139.

The protein belongs to the complex I 20 kDa subunit family. As to quaternary structure, NDH-1 is composed of 14 different subunits. Subunits NuoB, C, D, E, F, and G constitute the peripheral sector of the complex. It depends on [4Fe-4S] cluster as a cofactor.

The protein localises to the cell inner membrane. It catalyses the reaction a quinone + NADH + 5 H(+)(in) = a quinol + NAD(+) + 4 H(+)(out). In terms of biological role, NDH-1 shuttles electrons from NADH, via FMN and iron-sulfur (Fe-S) centers, to quinones in the respiratory chain. The immediate electron acceptor for the enzyme in this species is believed to be ubiquinone. Couples the redox reaction to proton translocation (for every two electrons transferred, four hydrogen ions are translocated across the cytoplasmic membrane), and thus conserves the redox energy in a proton gradient. This is NADH-quinone oxidoreductase subunit B from Leptospira borgpetersenii serovar Hardjo-bovis (strain JB197).